A 557-amino-acid polypeptide reads, in one-letter code: MKAILRASRIGRVILRYRLDALLEGTPAERWLRLAKPFVPRASAEIAVQSRGARLRLALQELGPIFVKFGQILSTRRDLIPADVAEELTLLQDRVKPFDGEAARLIVERALGLPVSVAFASFDTVPLASASIAQVHAATLPPDANGVRREVVVKVLRPEIERQIDADIALLHSLATLVERTHPRADKIRPREVVAEIEGTLSAELDLQREGANASVLRRFWEGSDDLYVPEVIWSHTAERALTLERVYGIPSDDIAKLDAAGIDRKALAAKGVRVFYTQVFRDNFFHADAHAGNIWVDSDPERRLNPRFIALDFGIMGQLSQEDQYYLAENFMAIFHKDYRRMAELHVEAGWMPSNVRIDELEAAARSVCEPYFTRPLSEISLAQVLIKLFRVAQRYELTLQPQLILLQKTLLNIEGVGRQLDPKLDIWAVARPVLERILRERYSPRRVLRELSKRLPEIMTHAPDMPRLVHSWLKQQVEGRHQIDIRSTELLALDLSLRKLQTRVVTAITGSGLLVVAAVLYGLHPDGWYLGTVPVWSWISGGAGSAALLVAWLRR.

Residues 121–509 (SFDTVPLASA…RKLQTRVVTA (389 aa)) enclose the Protein kinase domain. Residues 127 to 135 (LASASIAQV) and K154 each bind ATP. D289 acts as the Proton acceptor in catalysis. The next 2 membrane-spanning stretches (helical) occupy residues 506 to 526 (VVTAITGSGLLVVAAVLYGLH) and 535 to 555 (VPVWSWISGGAGSAALLVAWL).

The protein belongs to the ABC1 family. UbiB subfamily.

The protein localises to the cell inner membrane. It functions in the pathway cofactor biosynthesis; ubiquinone biosynthesis [regulation]. Its function is as follows. Is probably a protein kinase regulator of UbiI activity which is involved in aerobic coenzyme Q (ubiquinone) biosynthesis. The polypeptide is Probable protein kinase UbiB (Xanthomonas oryzae pv. oryzae (strain MAFF 311018)).